Here is a 136-residue protein sequence, read N- to C-terminus: Outer envelope pore protein 16-4, chloroplastic (136 aa).

The contains 4 beta strands stretch occupies residues 1–59; sequence MEEELLSAVPCSSLTVESVLRVATAGGLYGLCAGPRDARKIGLSGVSQASFVAKSIGRF. 4 helical membrane-spanning segments follow: residues 18–34, 56–72, 86–102, and 110–126; these read SVLRVATAGGLYGLCAG, IGRFGFQCGLVSGVFTM, WVNALVGGAVAGAAVAI, and VVGMAGLVSAFSVLANC.

Belongs to the Tim17/Tim22/Tim23 family. Plastid outer envelope porin OEP16 (TC 1.B.30) subfamily. As to quaternary structure, homodimer and oligomers in membrane.

The protein resides in the plastid. It is found in the chloroplast outer membrane. Voltage-dependent high-conductance channel with a slight cation-selectivity; selective for amino acids but excludes triosephosphates or uncharged sugars. Non-essential amino acid-selective channel protein and translocation pore for NADPH:protochlorophyllide oxidoreductase A (PORA) and possibly PORB. In Arabidopsis thaliana (Mouse-ear cress), this protein is Outer envelope pore protein 16-4, chloroplastic (OEP164).